We begin with the raw amino-acid sequence, 158 residues long: Transcription elongation factor GreA (158 aa).

A coiled-coil region spans residues 45–72 (AEYHAAREQQSFIEGRIKQLEGELSHAE).

Belongs to the GreA/GreB family.

Its function is as follows. Necessary for efficient RNA polymerase transcription elongation past template-encoded arresting sites. The arresting sites in DNA have the property of trapping a certain fraction of elongating RNA polymerases that pass through, resulting in locked ternary complexes. Cleavage of the nascent transcript by cleavage factors such as GreA or GreB allows the resumption of elongation from the new 3'terminus. GreA releases sequences of 2 to 3 nucleotides. The chain is Transcription elongation factor GreA from Xylella fastidiosa (strain M12).